A 480-amino-acid chain; its full sequence is REST corepressor 1 (480 aa).

The tract at residues 1–105 is disordered; sequence MPAMVEKGPE…GGGMRVGPQY (105 aa). 2 stretches are compositionally biased toward low complexity: residues 21–58 and 66–89; these read AASAASAAASAASAAASAAASAGTASASAAAAASAAAA and SLAAAAPNGNSGSNSWEEGSSGSS. Residues 72 to 251 form an interaction with HDAC1 region; that stretch reads PNGNSGSNSW…RHARKQKRER (180 aa). In terms of domain architecture, ELM2 spans 97–183; sequence GGMRVGPQYQ…KSLADLPNFT (87 aa). Lys-116 is covalently cross-linked (Glycyl lysine isopeptide (Lys-Gly) (interchain with G-Cter in SUMO2)). The residue at position 121 (Ser-121) is a Phosphoserine. The SANT 1 domain maps to 184–235; it reads PFPDEWTVEDKVLFEQAFSFHGKTFHRIQQMLPDKSIASLVKFYYSWKKTRT. The stretch at 238–265 forms a coiled coil; it reads SVMDRHARKQKREREESEDELEETNGSN. Residues 238-308 are disordered; sequence SVMDRHARKQ…AKNRAKRKPP (71 aa). Position 254 is a phosphoserine (Ser-254). A compositionally biased stretch (basic and acidic residues) spans 272–282; sequence DPNKESKKEVP. Positions 290–378 are interaction with KDM1A; it reads VKKEKHSTQA…LPEVIQKCNA (89 aa). Residue Lys-291 forms a Glycyl lysine isopeptide (Lys-Gly) (interchain with G-Cter in SUMO2) linkage. Positions 328–363 form a coiled coil; it reads ATTVLRQLDMELVSIKRQIQNIKQTNSALKEKLDGG. One can recognise an SANT 2 domain in the interval 375 to 426; sequence KCNARWTTEEQLLAVQAIRKYGRDFQAISDVIGNKSVVQVKNFFVNYRRRFN. The interval 436–466 is disordered; sequence AEHGKDETNGPANQKPVKSPESSIKIPEEED. Ser-454 is subject to Phosphoserine. Lys-460 participates in a covalent cross-link: Glycyl lysine isopeptide (Lys-Gly) (interchain with G-Cter in SUMO2).

Belongs to the CoREST family. In terms of assembly, component of a BHC histone deacetylase complex that contains HDAC1, HDAC2, HMG20B/BRAF35, KDM1A, RCOR1/CoREST and PHF21A/BHC80. The BHC complex may also contain ZMYM2, ZNF217, ZMYM3, GSE1 and GTF2I. Interacts with REST. Interacts with the SMARCE1/BAF57, suggesting that the BHC complex may recruit the ATP-dependent chromatin-remodeling SWI-SNF complex. Interacts directly with GFI1 and GFI1B in a RCOR/GFI/KDM1A/HDAC complex. Interacts with INMS1. Interacts with SOX2. In terms of tissue distribution, expressed in the external germinal layer (EGL) and internal granular layer (IGL) of the cerebellum and in Purkinje cells (at protein level).

The protein localises to the nucleus. Its function is as follows. Essential component of the BHC complex, a corepressor complex that represses transcription of neuron-specific genes in non-neuronal cells. The BHC complex is recruited at RE1/NRSE sites by REST and acts by deacetylating and demethylating specific sites on histones, thereby acting as a chromatin modifier. In the BHC complex, it serves as a molecular beacon for the recruitment of molecular machinery, including MeCP2 and SUV39H1, that imposes silencing across a chromosomal interval. Plays a central role in demethylation of Lys-4 of histone H3 by promoting demethylase activity of KDM1A on core histones and nucleosomal substrates. It also protects KDM1A from the proteasome. Component of a RCOR/GFI/KDM1A/HDAC complex that suppresses, via histone deacetylase (HDAC) recruitment, a number of genes implicated in multilineage blood cell development and controls hematopoietic differentiation. The sequence is that of REST corepressor 1 (Rcor1) from Mus musculus (Mouse).